The primary structure comprises 209 residues: Small ribosomal subunit protein uS3c (209 aa).

The KH type-2 domain occupies 39–109; it reads IRSCIEKQLH…QIRINLIEIT (71 aa).

The protein belongs to the universal ribosomal protein uS3 family. In terms of assembly, part of the 30S ribosomal subunit.

Its subcellular location is the plastid. It is found in the chloroplast. The sequence is that of Small ribosomal subunit protein uS3c (rps3) from Gracilaria tenuistipitata (Red alga).